Consider the following 608-residue polypeptide: Albumin (608 aa).

The N-terminal stretch at 1-18 is a signal peptide; it reads MKWVTFLLLLFISGSAFS. The propeptide occupies 19-24; that stretch reads RGVFRR. Albumin domains lie at 19-211, 212-403, and 404-601; these read RGVF…AVKE, KALV…EFQP, and LVEE…NLVA. A Cu cation-binding site is contributed by His27. Position 29 is a phosphoserine (Ser29). 2 residues coordinate Ca(2+): Glu30 and Asp37. A disulfide bond links Cys77 and Cys86. Ser89 bears the Phosphoserine mark. Residue His91 coordinates Zn(2+). Disulfide bonds link Cys99–Cys115, Cys114–Cys125, Cys148–Cys193, Cys192–Cys201, Cys224–Cys270, and Cys269–Cys277. Glu268 serves as a coordination point for Ca(2+). The Zn(2+) site is built by His271 and Asp273. Asp273, Glu276, and Asp279 together coordinate Ca(2+). 8 cysteine pairs are disulfide-bonded: Cys289-Cys303, Cys302-Cys313, Cys340-Cys385, Cys384-Cys393, Cys416-Cys462, Cys461-Cys472, Cys485-Cys501, and Cys500-Cys511. Ser297 is modified (phosphoserine). Residue Ser443 is modified to Phosphoserine. A phosphothreonine mark is found at Thr444 and Thr446. Residue Lys460 is modified to N6-succinyllysine. Phosphoserine is present on Ser513. Disulfide bonds link Cys538–Cys583 and Cys582–Cys591. Lys543 is subject to N6-succinyllysine. The residue at position 558 (Lys558) is an N6-methyllysine. Thr570 carries the phosphothreonine modification. An N6-succinyllysine modification is found at Lys588.

It belongs to the ALB/AFP/VDB family. In terms of assembly, interacts with FCGRT; this interaction regulates ALB homeostasis. Interacts with TASOR. In plasma, occurs in a covalently-linked complex with chromophore-bound alpha-1-microglobulin; this interaction does not prevent fatty acid binding to ALB. Post-translationally, phosphorylated by FAM20C in the extracellular medium. As to expression, plasma.

The protein localises to the secreted. Functionally, binds water, Ca(2+), Na(+), K(+), fatty acids, hormones, bilirubin and drugs. Its main function is the regulation of the colloidal osmotic pressure of blood. Major zinc transporter in plasma, typically binds about 80% of all plasma zinc. Major calcium and magnesium transporter in plasma, binds approximately 45% of circulating calcium and magnesium in plasma. Potentially has more than two calcium-binding sites and might additionally bind calcium in a non-specific manner. The shared binding site between zinc and calcium at residue Asp-273 suggests a crosstalk between zinc and calcium transport in the blood. The rank order of affinity is zinc &gt; calcium &gt; magnesium. Binds to the bacterial siderophore enterobactin and inhibits enterobactin-mediated iron uptake of E.coli from ferric transferrin, and may thereby limit the utilization of iron and growth of enteric bacteria such as E.coli. Does not prevent iron uptake by the bacterial siderophore aerobactin. The protein is Albumin (Alb) of Rattus norvegicus (Rat).